The sequence spans 453 residues: Chromosomal replication initiator protein DnaA (453 aa).

Residues 1 to 73 (MSKEEIWDKV…ADLIEKAIGT (73 aa)) form a domain I, interacts with DnaA modulators region. Residues 73–114 (TKLMPNFVIQEDLTEDKQVKDSAKAKSEAKPDVQAPQNSSED) are domain II. Positions 91–103 (VKDSAKAKSEAKP) are enriched in basic and acidic residues. A disordered region spans residues 91-113 (VKDSAKAKSEAKPDVQAPQNSSE). The interval 115–331 (QFNVHNTFET…GALTRVIAYS (217 aa)) is domain III, AAA+ region. ATP is bound by residues G159, G161, K162, and T163. The domain IV, binds dsDNA stretch occupies residues 332–453 (RLQNEAITTE…ENLEKEIRNQ (122 aa)).

The protein belongs to the DnaA family. As to quaternary structure, oligomerizes as a right-handed, spiral filament on DNA at oriC.

Its subcellular location is the cytoplasm. Plays an essential role in the initiation and regulation of chromosomal replication. ATP-DnaA binds to the origin of replication (oriC) to initiate formation of the DNA replication initiation complex once per cell cycle. Binds the DnaA box (a 9 base pair repeat at the origin) and separates the double-stranded (ds)DNA. Forms a right-handed helical filament on oriC DNA; dsDNA binds to the exterior of the filament while single-stranded (ss)DNA is stabiized in the filament's interior. The ATP-DnaA-oriC complex binds and stabilizes one strand of the AT-rich DNA unwinding element (DUE), permitting loading of DNA polymerase. After initiation quickly degrades to an ADP-DnaA complex that is not apt for DNA replication. Binds acidic phospholipids. In Staphylococcus carnosus (strain TM300), this protein is Chromosomal replication initiator protein DnaA.